Reading from the N-terminus, the 425-residue chain is Transmembrane protein 184A (425 aa).

Helical transmembrane passes span 51–71 (LFLTSALARGVSGVFVWTALL), 96–116 (LLFIVPIYAFDSWLSLLLLGG), 133–153 (FVIYSFLTLCFQYLGGESAIM), 189–209 (TLQFCIVKPVMALITIILQAF), 226–246 (VTLVYNASVSLALYALFLFYF), 261–281 (FLTIKAIIFLSFWQGMLLAIL), and 303–323 (LAAGYQNFLICVEMLFASLAL). Positions 375–425 (QYTQQSTHEAPGPGQGGHPAPSTHPGPASGSGGGKKSRNIEKRMLIPSEDL) are disordered. The segment covering 392–402 (HPAPSTHPGPA) has biased composition (low complexity).

Belongs to the TMEM184 family. Expressed in testis, pancreas, parotid salivary gland and mammary gland (at protein level).

Its subcellular location is the cell membrane. It is found in the cytoplasm. The protein localises to the perinuclear region. It localises to the cytoplasmic vesicle membrane. The protein resides in the early endosome membrane. Its subcellular location is the endosome. It is found in the cytoplasmic vesicle. The protein localises to the secretory vesicle membrane. In terms of biological role, acts as a heparin receptor in vascular cells. May be involved in vesicle transport in exocrine cells and Sertoli cells. In Mus musculus (Mouse), this protein is Transmembrane protein 184A (Tmem184a).